Here is a 545-residue protein sequence, read N- to C-terminus: MAIIAVAELVEEVSMSRVEHVLNYLKRRQLENPGFLYAIEDDCGNVFWADPTCRLNYTYFGDTLVFDTTYRRGKRYQVPFAAFTGFNHHGQPVLFGCALILNESESSFAWLFQTWLQAMSAPPPPSITVEPDRLIQVAVSRVFSQTRLRFSQPLIFEETEEKLAHVFQAHPTFESEFINCVTETETAAEFEASWDSIVRRYYMEDNDWLQSIYNARQQWVRVFIRDTFYGELSTNEGSSILNSFFQGFVDASTTMQMLIKQYEKAIDSWREKELKADYEATNSTPVMKTPSPMEKQAASLYTRAAFIKFQEEFVETLAIPANIISDSGTHTTYRVAKFGEVHKGHTVSFDSLEVKANCSCQMFEYSGIICRHILAVFSAKNVLALPSRYLLRRWTKEAKIRGTEEQPEFSNGCQESLNLCFNSLRQEATKYVEEGAKSIQIYKVAMDALDEAAKKVAAASNRTPGTRLPNGEAYPSEEARETANATNHPGGEKERTILELTAELERTGQRCEVYRANLLSILRDMEEQKFQLSLKVQNARLSLKE.

One can recognise an FAR1 domain in the interval 22-65 (LNYLKRRQLENPGFLYAIEDDCGNVFWADPTCRLNYTYFGDTLV). The MULE domain maps to 66–150 (FDTTYRRGKR…RVFSQTRLRF (85 aa)). The SWIM-type zinc finger occupies 345–381 (HTVSFDSLEVKANCSCQMFEYSGIICRHILAVFSAKN). The tract at residues 460 to 495 (SNRTPGTRLPNGEAYPSEEARETANATNHPGGEKER) is disordered. The stretch at 492 to 545 (EKERTILELTAELERTGQRCEVYRANLLSILRDMEEQKFQLSLKVQNARLSLKE) forms a coiled coil.

The protein belongs to the FHY3/FAR1 family. In terms of tissue distribution, expressed in hypocotyls, rosette and cauline leaves, inflorescences stems, flowers and siliques.

The protein resides in the nucleus. In terms of biological role, putative transcription activator involved in regulating light control of development. May act as a negative regulator specific to phyB signaling. This is Protein FAR1-RELATED SEQUENCE 9 (FRS9) from Arabidopsis thaliana (Mouse-ear cress).